The following is a 464-amino-acid chain: Chromosomal replication initiator protein DnaA (464 aa).

The interval 1–82 (MKNAAELWHN…GSRLDIQFIE (82 aa)) is domain I, interacts with DnaA modulators. The domain II stretch occupies residues 82–125 (EEGQAKHMLDRQNEEVEVMEVAPAKTKAQKTPKSSDELVMSELG). Residues 126-342 (QLNEKYTFDT…GALTRVIAYA (217 aa)) are domain III, AAA+ region. Residues glycine 170, glycine 172, lysine 173, and threonine 174 each contribute to the ATP site. Positions 343–464 (NLVGRTIDPN…EQIKHELKHS (122 aa)) are domain IV, binds dsDNA.

Belongs to the DnaA family. As to quaternary structure, oligomerizes as a right-handed, spiral filament on DNA at oriC.

Its subcellular location is the cytoplasm. Plays an essential role in the initiation and regulation of chromosomal replication. ATP-DnaA binds to the origin of replication (oriC) to initiate formation of the DNA replication initiation complex once per cell cycle. Binds the DnaA box (a 9 base pair repeat at the origin) and separates the double-stranded (ds)DNA. Forms a right-handed helical filament on oriC DNA; dsDNA binds to the exterior of the filament while single-stranded (ss)DNA is stabiized in the filament's interior. The ATP-DnaA-oriC complex binds and stabilizes one strand of the AT-rich DNA unwinding element (DUE), permitting loading of DNA polymerase. After initiation quickly degrades to an ADP-DnaA complex that is not apt for DNA replication. Binds acidic phospholipids. In Exiguobacterium sibiricum (strain DSM 17290 / CCUG 55495 / CIP 109462 / JCM 13490 / 255-15), this protein is Chromosomal replication initiator protein DnaA.